A 112-amino-acid polypeptide reads, in one-letter code: MTRVKRGNVSRKRHKKILNMSKGFRGAASTLFRTANQQNMKALRYSYRNRRQKKRDFRRMWITRVNSAVRRYGLNYSEFMNYLKTHKIQLNRKVIAQLSICDPEAFMQLLLF.

The protein belongs to the bacterial ribosomal protein bL20 family.

The protein resides in the plastid. It localises to the chloroplast. Binds directly to 23S ribosomal RNA and is necessary for the in vitro assembly process of the 50S ribosomal subunit. It is not involved in the protein synthesizing functions of that subunit. The protein is Large ribosomal subunit protein bL20c (rpl20) of Chlamydomonas reinhardtii (Chlamydomonas smithii).